The chain runs to 418 residues: D-amino acid dehydrogenase (418 aa).

3 to 17 contacts FAD; sequence VLVLGAGVAGVSSAW.

Belongs to the DadA oxidoreductase family. FAD is required as a cofactor.

It carries out the reaction a D-alpha-amino acid + A + H2O = a 2-oxocarboxylate + AH2 + NH4(+). Its pathway is amino-acid degradation; D-alanine degradation; NH(3) and pyruvate from D-alanine: step 1/1. Functionally, oxidative deamination of D-amino acids. This chain is D-amino acid dehydrogenase, found in Neisseria meningitidis serogroup C / serotype 2a (strain ATCC 700532 / DSM 15464 / FAM18).